Reading from the N-terminus, the 248-residue chain is 3-deoxy-manno-octulosonate cytidylyltransferase (248 aa).

Belongs to the KdsB family.

The protein localises to the cytoplasm. It carries out the reaction 3-deoxy-alpha-D-manno-oct-2-ulosonate + CTP = CMP-3-deoxy-beta-D-manno-octulosonate + diphosphate. It participates in nucleotide-sugar biosynthesis; CMP-3-deoxy-D-manno-octulosonate biosynthesis; CMP-3-deoxy-D-manno-octulosonate from 3-deoxy-D-manno-octulosonate and CTP: step 1/1. Its pathway is bacterial outer membrane biogenesis; lipopolysaccharide biosynthesis. Activates KDO (a required 8-carbon sugar) for incorporation into bacterial lipopolysaccharide in Gram-negative bacteria. The protein is 3-deoxy-manno-octulosonate cytidylyltransferase of Salmonella dublin (strain CT_02021853).